A 107-amino-acid chain; its full sequence is Large ribosomal subunit protein eL33B (107 aa).

The residue at position 2 (alanine 2) is an N-acetylalanine; partial. Lysine 47 participates in a covalent cross-link: Glycyl lysine isopeptide (Lys-Gly) (interchain with G-Cter in ubiquitin).

The protein belongs to the eukaryotic ribosomal protein eL33 family. As to quaternary structure, component of the large ribosomal subunit (LSU). Mature yeast ribosomes consist of a small (40S) and a large (60S) subunit. The 40S small subunit contains 1 molecule of ribosomal RNA (18S rRNA) and 33 different proteins (encoded by 57 genes). The large 60S subunit contains 3 rRNA molecules (25S, 5.8S and 5S rRNA) and 46 different proteins (encoded by 81 genes). N-terminally acetylated by acetyltransferase NatA.

It is found in the cytoplasm. In terms of biological role, component of the ribosome, a large ribonucleoprotein complex responsible for the synthesis of proteins in the cell. The small ribosomal subunit (SSU) binds messenger RNAs (mRNAs) and translates the encoded message by selecting cognate aminoacyl-transfer RNA (tRNA) molecules. The large subunit (LSU) contains the ribosomal catalytic site termed the peptidyl transferase center (PTC), which catalyzes the formation of peptide bonds, thereby polymerizing the amino acids delivered by tRNAs into a polypeptide chain. The nascent polypeptides leave the ribosome through a tunnel in the LSU and interact with protein factors that function in enzymatic processing, targeting, and the membrane insertion of nascent chains at the exit of the ribosomal tunnel. This Saccharomyces cerevisiae (strain ATCC 204508 / S288c) (Baker's yeast) protein is Large ribosomal subunit protein eL33B.